Consider the following 462-residue polypeptide: Bifunctional dihydrofolate reductase-thymidylate synthase (462 aa).

Residues 6–165 enclose the DHFR domain; that stretch reads TFSMVLAMTL…INYDYQHLIN (160 aa). Substrate is bound at residue Val-10. NADP(+) is bound by residues Ala-12 and 18–24; that span reads GIGYQNR. Residue Asp-32 participates in substrate binding. Residues 49-51 and 68-71 each bind NADP(+); these read RKT and ISKN. Position 101 (Ile-101) interacts with substrate. An NADP(+)-binding site is contributed by 102–109; the sequence is GGKRIFEE. Position 122 (Thr-122) interacts with substrate. The segment at 180–462 is thymidylate synthase; the sequence is ENQYLDMITK…HDKIEMKMAV (283 aa). Arg-200 contributes to the dUMP binding site. Cys-345 is a catalytic residue. Residues His-346, 364–368, Asn-376, and 406–408 each bind dUMP; these read QRSCD and HIY.

It in the N-terminal section; belongs to the dihydrofolate reductase family. The protein in the C-terminal section; belongs to the thymidylate synthase family.

The enzyme catalyses (6S)-5,6,7,8-tetrahydrofolate + NADP(+) = 7,8-dihydrofolate + NADPH + H(+). It catalyses the reaction dUMP + (6R)-5,10-methylene-5,6,7,8-tetrahydrofolate = 7,8-dihydrofolate + dTMP. The protein operates within cofactor biosynthesis; tetrahydrofolate biosynthesis; 5,6,7,8-tetrahydrofolate from 7,8-dihydrofolate: step 1/1. Bifunctional enzyme. Involved in de novo dTMP biosynthesis. Key enzyme in folate metabolism. Catalyzes an essential reaction for de novo glycine and purine synthesis, DNA precursor synthesis, and for the conversion of dUMP to dTMP. The chain is Bifunctional dihydrofolate reductase-thymidylate synthase from Paramecium tetraurelia.